The chain runs to 263 residues: 5'-nucleotidase SurE (263 aa).

A divalent metal cation is bound by residues D8, D9, S40, and N98.

The protein belongs to the SurE nucleotidase family. A divalent metal cation serves as cofactor.

The protein resides in the cytoplasm. The catalysed reaction is a ribonucleoside 5'-phosphate + H2O = a ribonucleoside + phosphate. In terms of biological role, nucleotidase that shows phosphatase activity on nucleoside 5'-monophosphates. The polypeptide is 5'-nucleotidase SurE (Gloeobacter violaceus (strain ATCC 29082 / PCC 7421)).